The sequence spans 146 residues: Ribonuclease H (146 aa).

In terms of domain architecture, RNase H type-1 spans 4-145 (ELNKVVIYTD…ADMLARSQIV (142 aa)). Mg(2+) is bound by residues Asp13, Glu51, Asp73, and Asp137.

The protein belongs to the RNase H family. In terms of assembly, monomer. Mg(2+) is required as a cofactor.

The protein resides in the cytoplasm. It carries out the reaction Endonucleolytic cleavage to 5'-phosphomonoester.. Functionally, endonuclease that specifically degrades the RNA of RNA-DNA hybrids. The sequence is that of Ribonuclease H from Ehrlichia chaffeensis (strain ATCC CRL-10679 / Arkansas).